The chain runs to 321 residues: Lipoyl synthase (321 aa).

[4Fe-4S] cluster is bound by residues cysteine 68, cysteine 73, cysteine 79, cysteine 94, cysteine 98, cysteine 101, and serine 308. Positions 80 to 297 (FNHGTATFMI…KALADELGFT (218 aa)) constitute a Radical SAM core domain.

The protein belongs to the radical SAM superfamily. Lipoyl synthase family. The cofactor is [4Fe-4S] cluster.

It is found in the cytoplasm. It catalyses the reaction [[Fe-S] cluster scaffold protein carrying a second [4Fe-4S](2+) cluster] + N(6)-octanoyl-L-lysyl-[protein] + 2 oxidized [2Fe-2S]-[ferredoxin] + 2 S-adenosyl-L-methionine + 4 H(+) = [[Fe-S] cluster scaffold protein] + N(6)-[(R)-dihydrolipoyl]-L-lysyl-[protein] + 4 Fe(3+) + 2 hydrogen sulfide + 2 5'-deoxyadenosine + 2 L-methionine + 2 reduced [2Fe-2S]-[ferredoxin]. Its pathway is protein modification; protein lipoylation via endogenous pathway; protein N(6)-(lipoyl)lysine from octanoyl-[acyl-carrier-protein]: step 2/2. In terms of biological role, catalyzes the radical-mediated insertion of two sulfur atoms into the C-6 and C-8 positions of the octanoyl moiety bound to the lipoyl domains of lipoate-dependent enzymes, thereby converting the octanoylated domains into lipoylated derivatives. The chain is Lipoyl synthase from Shewanella frigidimarina (strain NCIMB 400).